The primary structure comprises 530 residues: Membrane-associated transporter protein (530 aa).

Residues 1–45 lie on the Cytoplasmic side of the membrane; it reads MSGSNGPTDTHTYQSLAEDCPFGSVEQPKRSTGRLVMHSMAMFGR. A helical membrane pass occupies residues 46-66; sequence EFCYAVEAAYVTPVLLSVGLP. Topologically, residues 67-68 are extracellular; the sequence is KS. A helical transmembrane segment spans residues 69-89; sequence LYSMVWLLSPILGFLLQPVVG. The Cytoplasmic segment spans residues 90–105; it reads SASDHCRARWGRRRPY. A helical membrane pass occupies residues 106-126; sequence ILTLAIMMLLGMALYLNGDAV. At 127–138 the chain is on the extracellular side; it reads VSALVANPRQKL. Residues 139–159 traverse the membrane as a helical segment; sequence IWAISITMVGVVLFDFSADFI. The Cytoplasmic segment spans residues 160–184; it reads DGPIKAYLFDVCSHQDKEKGLHYHA. Residues 185 to 205 traverse the membrane as a helical segment; sequence LFTGFGGALGYILGAIDWVHL. Over 206-216 the chain is Extracellular; it reads DLGRLLGTEFQ. The chain crosses the membrane as a helical span at residues 217–237; the sequence is VMFFFSALVLILCFITHLCSI. Residues 238 to 318 lie on the Cytoplasmic side of the membrane; it reads PEAPLRDAAT…ALVNMPSHYR (81 aa). The interval 275-299 is disordered; the sequence is KNGGADTEQPVQEWKNKKPSGQSQR. A helical membrane pass occupies residues 319 to 339; the sequence is CLCVSHLIGWTAFLSNMLFFT. Residues 340–366 lie on the Extracellular side of the membrane; sequence DFMGQIVYHGDPYGAHNSTEFLIYERG. Residue asparagine 356 is glycosylated (N-linked (GlcNAc...) asparagine). Residues 367-387 form a helical membrane-spanning segment; it reads VEVGCWGLCINSVFSSVYSYF. Topologically, residues 388–398 are cytoplasmic; that stretch reads QKAMVSYIGLK. Residues 399 to 419 traverse the membrane as a helical segment; it reads GLYFMGYLLFGLGTGFIGLFP. At 420-425 the chain is on the extracellular side; that stretch reads NVYSTL. The helical transmembrane segment at 426 to 446 threads the bilayer; the sequence is VLCSMFGVMSSTLYTVPFNLI. Residues 447 to 477 lie on the Cytoplasmic side of the membrane; it reads AEYHREEEKEKGQEAPGGPDNQGRGKGVDCA. The helical transmembrane segment at 478–498 threads the bilayer; the sequence is ALTCMVQLAQILVGGGLGFLV. The Extracellular segment spans residues 499–504; it reads NMAGSV. The helical transmembrane segment at 505–525 threads the bilayer; sequence VVVVITASAVSLIGCCFVALF. The Cytoplasmic portion of the chain corresponds to 526 to 530; that stretch reads VRYVD.

It belongs to the glycoside-pentoside-hexuronide (GPH) cation symporter transporter (TC 2.A.2) family. In terms of assembly, interacts with TYRP1. In terms of tissue distribution, mainly expressed in eyeballs and skin melanocytes. Also detected in kidney, colon, gall bladder and pancreas.

The protein resides in the melanosome membrane. The catalysed reaction is sucrose(out) + H(+)(out) = sucrose(in) + H(+)(in). It catalyses the reaction D-glucose(out) + H(+)(out) = D-glucose(in) + H(+)(in). Functionally, proton-associated glucose and sucrose transporter. May be able to transport also fructose. Expressed at a late melanosome maturation stage where functions as a proton/glucose exporter which increase lumenal pH by decreasing glycolysis. Regulates melanogenesis by maintaining melanosome neutralization that is initially initiated by transient OCA2 and required for a proper function of the tyrosinase TYR. This Mus musculus (Mouse) protein is Membrane-associated transporter protein (Slc45a2).